The primary structure comprises 181 residues: uncharacterized protein (181 aa).

The helical transmembrane segment at 133–153 (MCVCVHVCACVYVCMCVLVCM) threads the bilayer.

It is found in the membrane. This is an uncharacterized protein from Homo sapiens (Human).